A 207-amino-acid chain; its full sequence is Coiled-coil domain-containing protein 124 homolog (207 aa).

The segment at 1–90 (MGNPKKRAEK…KAAKKNSSLD (90 aa)) is disordered. Residues 5 to 71 (KKRAEKAEAA…RLEKEEMESL (67 aa)) adopt a coiled-coil conformation. Composition is skewed to basic and acidic residues over residues 9–28 (EKAE…KKDA) and 41–65 (NKKE…RLEK).

The protein belongs to the CCDC124 family. Associates with translationally inactive ribosomes in the nonrotated state.

It localises to the cytoplasm. The protein resides in the nucleus. Functionally, ribosome-binding protein involved in ribosome hibernation by associating with translationally inactive ribosomes. Required for translational recovery after starvation from stationary phase. May facilitate rapid translation reactivation by stabilizing the recycling-competent state of inactive ribosomes. This is Coiled-coil domain-containing protein 124 homolog from Schizosaccharomyces pombe (strain 972 / ATCC 24843) (Fission yeast).